The chain runs to 343 residues: Heat-inducible transcription repressor HrcA (343 aa).

Belongs to the HrcA family.

Functionally, negative regulator of class I heat shock genes (grpE-dnaK-dnaJ and groELS operons). Prevents heat-shock induction of these operons. This is Heat-inducible transcription repressor HrcA from Bacillus pumilus (strain SAFR-032).